A 161-amino-acid chain; its full sequence is uncharacterized protein (161 aa).

Residues 1-23 (MKKFAFLTALFAACYLPNAYAHA) constitute a signal peptide (or 21). Residues 129-149 (IYLHDILGGIGYIVGIAGLIA) traverse the membrane as a helical segment.

The protein resides in the membrane. This is an uncharacterized protein from Haemophilus influenzae (strain ATCC 51907 / DSM 11121 / KW20 / Rd).